Here is a 381-residue protein sequence, read N- to C-terminus: tRNA pseudouridine synthase D (381 aa).

The active-site Nucleophile is the Asp-81. A TRUD domain is found at 160 to 335; it reads GMPNYFGSQR…TLGSRRFFWV (176 aa).

Belongs to the pseudouridine synthase TruD family.

It carries out the reaction uridine(13) in tRNA = pseudouridine(13) in tRNA. In terms of biological role, responsible for synthesis of pseudouridine from uracil-13 in transfer RNAs. This is tRNA pseudouridine synthase D from Helicobacter pylori (strain G27).